Consider the following 299-residue polypeptide: Formylglycine-generating enzyme (299 aa).

Residues cysteine 263 and cysteine 268 each coordinate Cu cation.

It belongs to the sulfatase-modifying factor family. Cu cation is required as a cofactor.

It carries out the reaction L-cysteinyl-[sulfatase] + 2 a thiol + O2 = an organic disulfide + 3-oxo-L-alanyl-[sulfatase] + hydrogen sulfide + H2O + H(+). Its pathway is protein modification; sulfatase oxidation. Its function is as follows. Oxidase that catalyzes the conversion of cysteine to 3-oxoalanine on target proteins. 3-oxoalanine modification, which is also named formylglycine (fGly), occurs in the maturation of arylsulfatases and some alkaline phosphatases that use the hydrated form of 3-oxoalanine as a catalytic nucleophile. The chain is Formylglycine-generating enzyme from Mycobacterium tuberculosis (strain ATCC 25618 / H37Rv).